We begin with the raw amino-acid sequence, 173 residues long: 5-hydroxymethyl-dUMP N-hydrolase (173 aa).

A2 is modified (N-acetylalanine). 5-hydroxymethyl-dUMP is bound at residue G16. Phosphoserine is present on S17. I18, R19, G20, S87, G89, and E93 together coordinate 5-hydroxymethyl-dUMP. The residue at position 87 (S87) is a Phosphoserine. A phosphoserine mark is found at S112, S117, S127, and S158. Residue S117 coordinates 5-hydroxymethyl-dUMP.

This sequence belongs to the 2'-deoxynucleoside 5'-phosphate N-hydrolase 1 family. In terms of assembly, monomer and homodimer.

The protein resides in the cytoplasm. It is found in the nucleus. It catalyses the reaction 5-hydroxymethyl-dUMP + H2O = 5-hydroxymethyluracil + 2-deoxy-D-ribose 5-phosphate. Part of a nucleotide salvage pathway that eliminates epigenetically modified 5-hydroxymethyl-dCMP (hmdCMP) in a two-step process entailing deamination to cytotoxic 5-hydroxymethyl-dUMP (hmdUMP), followed by its hydrolysis into 5-hydroxymethyluracil (hmU) and 2-deoxy-D-ribose 5-phosphate (deoxyribosephosphate). Catalyzes the second step in that pathway, the hydrolysis of the N-glycosidic bond in hmdUMP, degrading this cytotoxic nucleotide to avoid its genomic integration. This is 5-hydroxymethyl-dUMP N-hydrolase from Mus musculus (Mouse).